Reading from the N-terminus, the 209-residue chain is MGNGMNKILTGLFLGNFKDARDVEQLHKNNITHILSIHDSARPMLEGMKYLCIPASDSPSQNLIQHFKDSIAFIHECRLKGEGCLVHCLAGVSRSVTLVVAYVMTVTDFGWEDSLSAVRGARTCANPNMGFQKQLEDFGKCEVHHFRTWLKDTYGESTFHDKDEAKQLLDKHKQQEAAESQNATSSGRQWNSHLTSLSSRSYSNYTTET.

Residues 4 to 144 form the Tyrosine-protein phosphatase domain; it reads GMNKILTGLF…LEDFGKCEVH (141 aa). Cysteine 88 (phosphocysteine intermediate) is an active-site residue. The disordered stretch occupies residues 169–192; the sequence is LDKHKQQEAAESQNATSSGRQWNS. The segment covering 177 to 190 has biased composition (polar residues); that stretch reads AAESQNATSSGRQW.

This sequence belongs to the protein-tyrosine phosphatase family. Non-receptor class dual specificity subfamily.

It localises to the cytoplasm. Its subcellular location is the nucleus. It catalyses the reaction O-phospho-L-tyrosyl-[protein] + H2O = L-tyrosyl-[protein] + phosphate. The catalysed reaction is O-phospho-L-seryl-[protein] + H2O = L-seryl-[protein] + phosphate. The enzyme catalyses O-phospho-L-threonyl-[protein] + H2O = L-threonyl-[protein] + phosphate. Activates the Jnk signaling pathway. Dephosphorylates and deactivates p38 and stress-activated protein kinase/c-Jun N-terminal kinase (SAPK/JNK). In Xenopus laevis (African clawed frog), this protein is Dual specificity protein phosphatase 22 (dusp22).